Consider the following 336-residue polypeptide: Ketol-acid reductoisomerase (NADP(+)) (336 aa).

The KARI N-terminal Rossmann domain maps to 1 to 182 (MAVIYYDKDA…GVTRAGVIET (182 aa)). Residues 25–28 (YGSQ), R48, S51, S53, and 83–86 (DEHQ) contribute to the NADP(+) site. The active site involves H108. G134 is a binding site for NADP(+). In terms of domain architecture, KARI C-terminal knotted spans 183 to 328 (TFKEETETDL…KELRKMMPWL (146 aa)). 4 residues coordinate Mg(2+): D191, E195, E227, and E231. Position 252 (S252) interacts with substrate.

The protein belongs to the ketol-acid reductoisomerase family. It depends on Mg(2+) as a cofactor.

The catalysed reaction is (2R)-2,3-dihydroxy-3-methylbutanoate + NADP(+) = (2S)-2-acetolactate + NADPH + H(+). The enzyme catalyses (2R,3R)-2,3-dihydroxy-3-methylpentanoate + NADP(+) = (S)-2-ethyl-2-hydroxy-3-oxobutanoate + NADPH + H(+). It functions in the pathway amino-acid biosynthesis; L-isoleucine biosynthesis; L-isoleucine from 2-oxobutanoate: step 2/4. Its pathway is amino-acid biosynthesis; L-valine biosynthesis; L-valine from pyruvate: step 2/4. Functionally, involved in the biosynthesis of branched-chain amino acids (BCAA). Catalyzes an alkyl-migration followed by a ketol-acid reduction of (S)-2-acetolactate (S2AL) to yield (R)-2,3-dihydroxy-isovalerate. In the isomerase reaction, S2AL is rearranged via a Mg-dependent methyl migration to produce 3-hydroxy-3-methyl-2-ketobutyrate (HMKB). In the reductase reaction, this 2-ketoacid undergoes a metal-dependent reduction by NADPH to yield (R)-2,3-dihydroxy-isovalerate. The polypeptide is Ketol-acid reductoisomerase (NADP(+)) (Thermotoga maritima (strain ATCC 43589 / DSM 3109 / JCM 10099 / NBRC 100826 / MSB8)).